Consider the following 298-residue polypeptide: N-acetylmuramic acid 6-phosphate etherase 2 (298 aa).

The SIS domain occupies 51 to 214; that stretch reads IVSRFEQGGR…STAAMVRLGR (164 aa). The active-site Proton donor is Glu-79. Residue Glu-110 is part of the active site.

The protein belongs to the GCKR-like family. MurNAc-6-P etherase subfamily. As to quaternary structure, homodimer.

It catalyses the reaction N-acetyl-D-muramate 6-phosphate + H2O = N-acetyl-D-glucosamine 6-phosphate + (R)-lactate. It functions in the pathway amino-sugar metabolism; N-acetylmuramate degradation. In terms of biological role, specifically catalyzes the cleavage of the D-lactyl ether substituent of MurNAc 6-phosphate, producing GlcNAc 6-phosphate and D-lactate. In Bacillus licheniformis (strain ATCC 14580 / DSM 13 / JCM 2505 / CCUG 7422 / NBRC 12200 / NCIMB 9375 / NCTC 10341 / NRRL NRS-1264 / Gibson 46), this protein is N-acetylmuramic acid 6-phosphate etherase 2.